A 57-amino-acid polypeptide reads, in one-letter code: Large ribosomal subunit protein bL32A (57 aa).

The tract at residues 1 to 22 is disordered; it reads MAVPARRTSKTKKRLRRTHEKL. Positions 7–20 are enriched in basic residues; sequence RTSKTKKRLRRTHE.

This sequence belongs to the bacterial ribosomal protein bL32 family.

The sequence is that of Large ribosomal subunit protein bL32A (rpmF1) from Enterococcus faecalis (strain ATCC 700802 / V583).